A 148-amino-acid chain; its full sequence is Inner membrane protein YccF (148 aa).

Residues 1–14 (MRTVLNILNFVLGG) are Periplasmic-facing. The chain crosses the membrane as a helical span at residues 15 to 37 (FATTLGWLLATLVSIVLIFTLPL). At 38 to 76 (TRSCWEITKLSLVPYGNEAIHVDELNPAGKNVLLNTGGT) the chain is on the cytoplasmic side. A helical transmembrane segment spans residues 77 to 99 (VLNIFWLIFFGWWLCLMHIATGI). The Periplasmic portion of the chain corresponds to 100-102 (AQC). Residues 103-125 (ISIIGIPVGIANFKIAAIALWPV) form a helical membrane-spanning segment. Topologically, residues 126–148 (GRRVVSVETAQAAREANARRRFE) are cytoplasmic.

It is found in the cell inner membrane. This is Inner membrane protein YccF (yccF) from Escherichia coli (strain K12).